The primary structure comprises 164 residues: Arginine repressor (164 aa).

This sequence belongs to the ArgR family.

It localises to the cytoplasm. The protein operates within amino-acid biosynthesis; L-arginine biosynthesis [regulation]. Functionally, regulates arginine biosynthesis genes. The sequence is that of Arginine repressor from Mycobacterium avium (strain 104).